Here is a 171-residue protein sequence, read N- to C-terminus: Myelin basic protein (171 aa).

Ala-1 carries the N-acetylalanine modification. 2 positions are modified to phosphoserine: Ser-7 and Ser-12. Residue Tyr-14 is modified to Phosphotyrosine. Thr-17 carries the phosphothreonine modification. A Phosphoserine modification is found at Ser-19. Thr-20 is modified (phosphothreonine). Residues Arg-25 and Arg-31 each carry the citrulline modification. Thr-35 carries the post-translational modification Phosphothreonine. Ser-40 bears the Phosphoserine mark. An omega-N-methylarginine mark is found at Arg-43 and Arg-49. Residues 44–115 form a disordered region; it reads FFGGDRGAPK…GRGLSLSRFS (72 aa). Ser-56 is modified (phosphoserine). A Phosphotyrosine modification is found at Tyr-69. Ser-76 is modified (phosphoserine). A phosphothreonine mark is found at Thr-80, Thr-95, and Thr-98. Gln-103 carries the deamidated glutamine modification. Arg-107 is subject to Omega-N-methylarginine; alternate. Arg-107 is subject to Symmetric dimethylarginine; alternate. A Phosphoserine modification is found at Ser-115. Residues Arg-122 and Arg-130 each carry the citrulline modification. Gln-148 bears the Deamidated glutamine mark. A Citrulline modification is found at Arg-160. Phosphoserine is present on Ser-162. Ser-166 is subject to Phosphoserine; by UHMK1. Arg-171 bears the Citrulline mark.

It belongs to the myelin basic protein family. In terms of assembly, homodimer. As in other animals, several charge isomers may be produced as a result of optional post-translational modifications, such as phosphorylation of serine or threonine residues, deamidation of glutamine or asparagine residues, citrullination and methylation of arginine residues. In terms of processing, phosphorylated by TAOK2, VRK2, MAPK11, MAPK12, MAPK14 and MINK1. Post-translationally, proteolytically cleaved in B cell lysosomes by cathepsin CTSG which degrades the major immunogenic MBP epitope and prevents the activation of MBP-specific autoreactive T cells.

The protein resides in the myelin membrane. Functionally, is, with PLP, the most abundant protein component of the myelin membrane in the CNS. Has a role in both the formation and stabilization of this compact multilayer arrangement of bilayers. Each splice variant and charge isomer may have a specialized function in the assembly of an optimized, biochemically functional myelin membrane. This chain is Myelin basic protein (MBP), found in Pan troglodytes (Chimpanzee).